The chain runs to 433 residues: Adenosylhomocysteinase B (433 aa).

Thr57, Asp132, Glu157, Lys187, and Asp191 together coordinate substrate. The segment at 184 to 351 (SVTKSKFDNL…EGRLVNLGCA (168 aa)) is NAD binding.

This sequence belongs to the adenosylhomocysteinase family. In terms of assembly, homotetramer. It depends on NAD(+) as a cofactor.

The protein localises to the cytoplasm. The enzyme catalyses S-adenosyl-L-homocysteine + H2O = L-homocysteine + adenosine. The protein operates within amino-acid biosynthesis; L-homocysteine biosynthesis; L-homocysteine from S-adenosyl-L-homocysteine: step 1/1. Functionally, catalyzes the hydrolysis of S-adenosyl-L-homocysteine to form adenosine and homocysteine. Binds copper ions. This chain is Adenosylhomocysteinase B (ahcy-b), found in Xenopus laevis (African clawed frog).